Consider the following 161-residue polypeptide: MKYDTSELCDIYQEDVNVVEPLFSNFGGRASFGGQIITVKCFEDNGLLYDLLEQNGRGRVLVVDGGGSVRRALVDAELARLAVQNEWEGLVIYGAVRQVDDLEELDIGIQAMAAIPVGAAGEGIGESDVRVNFGGVTFFSGDHLYADNTGIILSEDPLDIE.

Belongs to the RraA family. Homotrimer. Binds to both RNA-binding sites in the C-terminal region of Rne and to RhlB.

It is found in the cytoplasm. Globally modulates RNA abundance by binding to RNase E (Rne) and regulating its endonucleolytic activity. Can modulate Rne action in a substrate-dependent manner by altering the composition of the degradosome. Modulates RNA-binding and helicase activities of the degradosome. This chain is Regulator of ribonuclease activity A, found in Shigella boydii serotype 18 (strain CDC 3083-94 / BS512).